We begin with the raw amino-acid sequence, 534 residues long: CTP synthase (534 aa).

Residues 1-267 form an amidoligase domain region; sequence MTKYIFVTGG…DQIVCDHLKL (267 aa). Residue serine 13 participates in CTP binding. Position 13 (serine 13) interacts with UTP. 14–19 contributes to the ATP binding site; the sequence is SIGKGI. L-glutamine is bound at residue tyrosine 54. Residue aspartate 71 coordinates ATP. Residues aspartate 71 and glutamate 141 each contribute to the Mg(2+) site. CTP-binding positions include 148-150, 188-193, and lysine 224; these read DIE and KTKPTQ. Residues 188-193 and lysine 224 each bind UTP; that span reads KTKPTQ. Residue 240-242 participates in ATP binding; sequence RDV. One can recognise a Glutamine amidotransferase type-1 domain in the interval 292–534; it reads KIALVGKYVE…FVTAAIKNSN (243 aa). Glycine 354 lines the L-glutamine pocket. The active-site Nucleophile; for glutamine hydrolysis is the cysteine 381. L-glutamine contacts are provided by residues 382-385, glutamate 405, and arginine 463; that span reads LGMQ. Active-site residues include histidine 508 and glutamate 510.

Belongs to the CTP synthase family. In terms of assembly, homotetramer.

The enzyme catalyses UTP + L-glutamine + ATP + H2O = CTP + L-glutamate + ADP + phosphate + 2 H(+). It carries out the reaction L-glutamine + H2O = L-glutamate + NH4(+). The catalysed reaction is UTP + NH4(+) + ATP = CTP + ADP + phosphate + 2 H(+). Its pathway is pyrimidine metabolism; CTP biosynthesis via de novo pathway; CTP from UDP: step 2/2. Allosterically activated by GTP, when glutamine is the substrate; GTP has no effect on the reaction when ammonia is the substrate. The allosteric effector GTP functions by stabilizing the protein conformation that binds the tetrahedral intermediate(s) formed during glutamine hydrolysis. Inhibited by the product CTP, via allosteric rather than competitive inhibition. Its function is as follows. Catalyzes the ATP-dependent amination of UTP to CTP with either L-glutamine or ammonia as the source of nitrogen. Regulates intracellular CTP levels through interactions with the four ribonucleotide triphosphates. This chain is CTP synthase, found in Streptococcus pyogenes serotype M1.